We begin with the raw amino-acid sequence, 136 residues long: Nucleoside diphosphate kinase (136 aa).

Lys10, Phe58, Arg86, Thr92, Arg104, and Asn114 together coordinate ATP. His117 acts as the Pros-phosphohistidine intermediate in catalysis.

This sequence belongs to the NDK family. Homotetramer. The cofactor is Mg(2+).

Its subcellular location is the cytoplasm. The enzyme catalyses a 2'-deoxyribonucleoside 5'-diphosphate + ATP = a 2'-deoxyribonucleoside 5'-triphosphate + ADP. It catalyses the reaction a ribonucleoside 5'-diphosphate + ATP = a ribonucleoside 5'-triphosphate + ADP. In terms of biological role, major role in the synthesis of nucleoside triphosphates other than ATP. The ATP gamma phosphate is transferred to the NDP beta phosphate via a ping-pong mechanism, using a phosphorylated active-site intermediate. The protein is Nucleoside diphosphate kinase of Corynebacterium glutamicum (strain R).